The following is an 86-amino-acid chain: Small muscular protein (86 aa).

Residues M20 to P64 are disordered.

Belongs to the SMPX family. In terms of tissue distribution, high level of expression found in the heart and skeletal muscle, a very low expression in the lung and spleen and no expression found in the liver, kidney, fat and brain.

Functionally, plays a role in the regulatory network through which muscle cells coordinate their structural and functional states during growth, adaptation, and repair. In Sus scrofa (Pig), this protein is Small muscular protein (SMPX).